The primary structure comprises 507 residues: Alkyl hydroperoxide reductase subunit F (507 aa).

207–222 provides a ligand contact to FAD; it reads DVLIVGGGPASGSAAI. A disulfide bridge links Cys-335 with Cys-338. 347 to 361 serves as a coordination point for NAD(+); sequence DVAVIGGGNSGVEAA. FAD is bound at residue 467-477; sequence TNVPGIFAAGD.

The protein belongs to the class-II pyridine nucleotide-disulfide oxidoreductase family. As to quaternary structure, homodimer. The cofactor is FAD.

Functionally, serves to protect the cell against DNA damage by alkyl hydroperoxides. It can use either NADH or NADPH as electron donor for direct reduction of redox dyes or of alkyl hydroperoxides when combined with the AhpC protein. The protein is Alkyl hydroperoxide reductase subunit F (ahpF) of Staphylococcus aureus (strain NCTC 8325 / PS 47).